Here is a 333-residue protein sequence, read N- to C-terminus: Phosphate acyltransferase (333 aa).

The protein belongs to the PlsX family. In terms of assembly, homodimer. Probably interacts with PlsY.

It localises to the cytoplasm. The enzyme catalyses a fatty acyl-[ACP] + phosphate = an acyl phosphate + holo-[ACP]. It participates in lipid metabolism; phospholipid metabolism. Functionally, catalyzes the reversible formation of acyl-phosphate (acyl-PO(4)) from acyl-[acyl-carrier-protein] (acyl-ACP). This enzyme utilizes acyl-ACP as fatty acyl donor, but not acyl-CoA. The polypeptide is Phosphate acyltransferase (Thermosipho melanesiensis (strain DSM 12029 / CIP 104789 / BI429)).